The primary structure comprises 398 residues: tRNA-specific 2-thiouridylase MnmA (398 aa).

Residues 20–27 and leucine 46 each bind ATP; that span reads AMSGGVDS. Cysteine 114 serves as the catalytic Nucleophile. Cysteines 114 and 210 form a disulfide. Glycine 138 is an ATP binding site. An interaction with tRNA region spans residues 160–162; it reads RDQ. Cysteine 210 acts as the Cysteine persulfide intermediate in catalysis.

It belongs to the MnmA/TRMU family.

It is found in the cytoplasm. It catalyses the reaction S-sulfanyl-L-cysteinyl-[protein] + uridine(34) in tRNA + AH2 + ATP = 2-thiouridine(34) in tRNA + L-cysteinyl-[protein] + A + AMP + diphosphate + H(+). Catalyzes the 2-thiolation of uridine at the wobble position (U34) of tRNA, leading to the formation of s(2)U34. The protein is tRNA-specific 2-thiouridylase MnmA of Brucella canis (strain ATCC 23365 / NCTC 10854 / RM-666).